The primary structure comprises 396 residues: Ribose-phosphate pyrophosphokinase 1, chloroplastic (396 aa).

The N-terminal 36 residues, 1 to 36 (MPLSYSAAAAAAPSPLAARSRGLLRRPPRSSPVVVR), are a transit peptide targeting the chloroplast. 4 residues coordinate Mg(2+): Asp-204, His-206, Asp-215, and Asp-219. The tract at residues 290 to 305 (GKVAVMMDDMIDTAGT) is binding of phosphoribosylpyrophosphate.

Belongs to the ribose-phosphate pyrophosphokinase family. The cofactor is Mg(2+).

It is found in the plastid. The protein localises to the chloroplast. It carries out the reaction D-ribose 5-phosphate + ATP = 5-phospho-alpha-D-ribose 1-diphosphate + AMP + H(+). This Oryza sativa subsp. japonica (Rice) protein is Ribose-phosphate pyrophosphokinase 1, chloroplastic.